The sequence spans 449 residues: Histidinol dehydrogenase (449 aa).

Residues tyrosine 136, glutamine 204, and asparagine 232 each contribute to the NAD(+) site. Substrate contacts are provided by threonine 255, glutamine 277, and histidine 280. Positions 277 and 280 each coordinate Zn(2+). Catalysis depends on proton acceptor residues glutamate 346 and histidine 347. Residues histidine 347, aspartate 380, glutamate 434, and histidine 439 each contribute to the substrate site. Residue aspartate 380 coordinates Zn(2+). Residue histidine 439 coordinates Zn(2+).

The protein belongs to the histidinol dehydrogenase family. It depends on Zn(2+) as a cofactor.

The enzyme catalyses L-histidinol + 2 NAD(+) + H2O = L-histidine + 2 NADH + 3 H(+). It functions in the pathway amino-acid biosynthesis; L-histidine biosynthesis; L-histidine from 5-phospho-alpha-D-ribose 1-diphosphate: step 9/9. Functionally, catalyzes the sequential NAD-dependent oxidations of L-histidinol to L-histidinaldehyde and then to L-histidine. The protein is Histidinol dehydrogenase (hisD) of Mycobacterium leprae (strain TN).